Here is a 443-residue protein sequence, read N- to C-terminus: Dihydroorotate dehydrogenase (quinone), mitochondrial (443 aa).

A mitochondrion-targeting transit peptide spans 1–21; it reads MYQRSLFRGVAQGLKRSSVRF. A helical membrane pass occupies residues 38 to 54; it reads WKLLSVIGSFTAGVAIY. Residues 122-126 and serine 146 each bind FMN; that span reads AGFDK. Lysine 126 contacts substrate. A Phosphoserine modification is found at serine 168. Residue 171-175 coordinates substrate; it reads NRYGF. FMN-binding residues include asparagine 234 and asparagine 264. Residue 264–269 participates in substrate binding; it reads NVSSPN. Serine 267 acts as the Nucleophile in catalysis. Lysine 306 serves as a coordination point for FMN. Substrate is bound at residue 335–336; sequence NT. Residues glycine 358, glycine 387, and 408–409 each bind FMN; that span reads YT.

It belongs to the dihydroorotate dehydrogenase family. Type 2 subfamily. FMN is required as a cofactor.

Its subcellular location is the mitochondrion inner membrane. The enzyme catalyses (S)-dihydroorotate + a quinone = orotate + a quinol. Its pathway is pyrimidine metabolism; UMP biosynthesis via de novo pathway; orotate from (S)-dihydroorotate (quinone route): step 1/1. Its function is as follows. In the de novo pyrimidine biosynthesis pathway, catalyzes the stereospecific oxidation of (S)-dihydroorotate to orotate with reduction of flavin and the transfer of electrons to ubiquinone, which is part of the respiratory chain. Does not use fumarate and NAD as electron acceptors. In Schizosaccharomyces pombe (strain 972 / ATCC 24843) (Fission yeast), this protein is Dihydroorotate dehydrogenase (quinone), mitochondrial (ura3).